The following is a 442-amino-acid chain: uncharacterized protein (442 aa).

Residues Cys43, Cys49, Cys52, and Cys130 each coordinate [4Fe-4S] cluster. Residues Gln273, Tyr302, Glu323, and Asp372 each contribute to the S-adenosyl-L-methionine site. Cys399 acts as the Nucleophile in catalysis.

The protein belongs to the class I-like SAM-binding methyltransferase superfamily. RNA M5U methyltransferase family.

This is an uncharacterized protein from Protochlamydia amoebophila (strain UWE25).